A 189-amino-acid polypeptide reads, in one-letter code: Peptidyl-tRNA hydrolase (189 aa).

Position 15 (Tyr15) interacts with tRNA. The active-site Proton acceptor is His20. Positions 66, 68, and 114 each coordinate tRNA.

The protein belongs to the PTH family. As to quaternary structure, monomer.

Its subcellular location is the cytoplasm. The enzyme catalyses an N-acyl-L-alpha-aminoacyl-tRNA + H2O = an N-acyl-L-amino acid + a tRNA + H(+). Hydrolyzes ribosome-free peptidyl-tRNAs (with 1 or more amino acids incorporated), which drop off the ribosome during protein synthesis, or as a result of ribosome stalling. Its function is as follows. Catalyzes the release of premature peptidyl moieties from peptidyl-tRNA molecules trapped in stalled 50S ribosomal subunits, and thus maintains levels of free tRNAs and 50S ribosomes. This Streptococcus mutans serotype c (strain ATCC 700610 / UA159) protein is Peptidyl-tRNA hydrolase.